Reading from the N-terminus, the 299-residue chain is Nucleotide-binding protein glr4163 (299 aa).

18–25 (SPAGAGRT) lines the ATP pocket.

It belongs to the RapZ-like family.

Displays ATPase and GTPase activities. The polypeptide is Nucleotide-binding protein glr4163 (Gloeobacter violaceus (strain ATCC 29082 / PCC 7421)).